A 302-amino-acid chain; its full sequence is Galactofuranosyltransferase GlfT1 (302 aa).

The protein belongs to the glycosyltransferase 2 family.

The protein localises to the cell membrane. It localises to the secreted. It is found in the cell wall. It carries out the reaction alpha-L-rhamnosyl-(1-&gt;3)-N-acetyl-alpha-D-glucosaminyl-diphospho-trans,octa-cis-decaprenol + 2 UDP-alpha-D-galactofuranose = beta-D-galactofuranosyl-(1-&gt;5)-beta-D-galactofuranosyl-(1-&gt;4)-alpha-L-rhamnosyl-(1-&gt;3)-N-acetyl-alpha-D-glucosaminyl-diphospho-trans,octa-cis-decaprenol + 2 UDP + 2 H(+). It participates in cell wall biogenesis; cell wall polysaccharide biosynthesis. In terms of biological role, involved in the biosynthesis of the arabinogalactan (AG) region of the mycolylarabinogalactan-peptidoglycan (mAGP) complex, an essential component of the mycobacterial cell wall. Catalyzes the transfer of the first two galactofuranosyl (Galf) units from UDP-galactofuranose (UDP-Galf) onto the rhamnosyl-GlcNAc-diphospho-decaprenol (Rha-GlcNAc-PP-C50) acceptor, yielding galactofuranosyl-galactofuranosyl-rhamnosyl-GlcNAc-diphospho-decaprenol (Galf-Galf-Rha-GlcNAc-PP-C50). Thus, GlfT1 is the initiator of galactan synthesis, while GlfT2 continues with the subsequent polymerization events. The protein is Galactofuranosyltransferase GlfT1 of Mycolicibacterium smegmatis (strain ATCC 700084 / mc(2)155) (Mycobacterium smegmatis).